Here is a 105-residue protein sequence, read N- to C-terminus: uncharacterized protein (105 aa).

The region spanning 1–101 (MMDLGDKINP…KDIQEISAAV (101 aa)) is the Hcy-binding domain.

This is an uncharacterized protein from Saccharomyces cerevisiae (strain ATCC 204508 / S288c) (Baker's yeast).